The primary structure comprises 153 residues: Type II secretion system core protein G (153 aa).

Residues 1–7 (MERRQRG) constitute a propeptide, leader sequence. Phe8 carries the N-methylphenylalanine modification. A helical transmembrane segment spans residues 8–28 (FTLLEIMVVIVILGVLASLVV). Disordered regions lie at residues 68–91 (EQGLGALVKKPTTPPEPRNYPQDG) and 126–153 (MPDTDDDIGNWNVGNGAHNNGGNGNGNP). Positions 134 to 143 (GNWNVGNGAH) are enriched in low complexity. Residues 144-153 (NNGGNGNGNP) show a composition bias toward gly residues.

The protein belongs to the GSP G family. As to quaternary structure, type II secretion system is composed of four main components: the outer membrane complex, the inner membrane complex, the cytoplasmic secretion ATPase and the periplasm-spanning pseudopilus. Forms homomultimers. In terms of processing, cleaved by the prepilin peptidase. Post-translationally, methylated by prepilin peptidase at the amino group of the N-terminal phenylalanine once the leader sequence is cleaved.

It localises to the cell inner membrane. In terms of biological role, core component of the type II secretion system required for the energy-dependent secretion of extracellular factors such as proteases and toxins from the periplasm. Pseudopilin (pilin-like) protein that polymerizes to form the pseudopilus. Further polymerization triggers pseudopilus growth. This Dickeya chrysanthemi (Pectobacterium chrysanthemi) protein is Type II secretion system core protein G (outG).